The following is a 105-amino-acid chain: MRSIFYFALAFAALTCSNASAAFPNPDETRLLPDTFTKRSLRVAGQEVARGDRGEEIVRVIVQSTNKIFKRPAEKDMSKLIAAAKIAMLEKKMAKLSFVGKKAAK.

Positions 1 to 21 (MRSIFYFALAFAALTCSNASA) are cleaved as a signal peptide. Positions 39–57 (RSLRVAGQEVARGDRGEEI) match the RxLR-dEER motif.

Belongs to the RxLR effector family.

Its subcellular location is the secreted. It is found in the host nucleus. The protein resides in the host nucleolus. The protein localises to the host cytoplasm. Its function is as follows. Effector that enhances P.infestans colonization of Nicotiana benthamiana leaves. In Phytophthora infestans (strain T30-4) (Potato late blight agent), this protein is RxLR effector protein PITG_18670.